The primary structure comprises 29 residues: Cyclotide cter-K (29 aa).

Residues 1–29 (HEPCGESCVFIPCITTVVGCSCKNKVCYN) constitute a cross-link (cyclopeptide (His-Asn)). 3 cysteine pairs are disulfide-bonded: C4/C20, C8/C22, and C13/C27.

Post-translationally, contains 3 disulfide bonds. This is a cyclic peptide.

In terms of biological role, probably participates in a plant defense mechanism. In Clitoria ternatea (Butterfly pea), this protein is Cyclotide cter-K.